Consider the following 89-residue polypeptide: Large ribosomal subunit protein bL27 (89 aa).

A disordered region spans residues 1 to 21 (MAHKKAGGSSRNGRDSKGKRL).

Belongs to the bacterial ribosomal protein bL27 family.

The polypeptide is Large ribosomal subunit protein bL27 (Bradyrhizobium diazoefficiens (strain JCM 10833 / BCRC 13528 / IAM 13628 / NBRC 14792 / USDA 110)).